The following is a 143-amino-acid chain: Cytochrome c-type biogenesis protein CcmE (143 aa).

The Cytoplasmic segment spans residues 1 to 8 (MTPVRRRK). A helical; Signal-anchor for type II membrane protein transmembrane segment spans residues 9–29 (LFILLFALSVLSAAAALVLYA). Residues 30-143 (LRQNISLFYT…KSALADKVKQ (114 aa)) lie on the Periplasmic side of the membrane. 2 residues coordinate heme: His-124 and Tyr-128.

This sequence belongs to the CcmE/CycJ family.

The protein localises to the cell inner membrane. Heme chaperone required for the biogenesis of c-type cytochromes. Transiently binds heme delivered by CcmC and transfers the heme to apo-cytochromes in a process facilitated by CcmF and CcmH. This Legionella pneumophila (strain Lens) protein is Cytochrome c-type biogenesis protein CcmE.